The chain runs to 32 residues: Photosystem II reaction center protein T (32 aa).

The helical transmembrane segment at 3-23 (TLVYTFLLIGTLAVLFAAVFF) threads the bilayer.

Belongs to the PsbT family. In terms of assembly, PSII is composed of 1 copy each of membrane proteins PsbA, PsbB, PsbC, PsbD, PsbE, PsbF, PsbH, PsbI, PsbJ, PsbK, PsbL, PsbM, PsbT, PsbX, PsbY, PsbZ, Psb30/Ycf12, at least 3 peripheral proteins of the oxygen-evolving complex and a large number of cofactors. It forms dimeric complexes.

It localises to the plastid. Its subcellular location is the chloroplast thylakoid membrane. In terms of biological role, found at the monomer-monomer interface of the photosystem II (PS II) dimer, plays a role in assembly and dimerization of PSII. PSII is a light-driven water plastoquinone oxidoreductase, using light energy to abstract electrons from H(2)O, generating a proton gradient subsequently used for ATP formation. This chain is Photosystem II reaction center protein T, found in Guillardia theta (Cryptophyte).